The sequence spans 259 residues: Imidazole glycerol phosphate synthase subunit HisF (259 aa).

Residues Asp11 and Asp130 contribute to the active site.

It belongs to the HisA/HisF family. Heterodimer of HisH and HisF.

The protein localises to the cytoplasm. The enzyme catalyses 5-[(5-phospho-1-deoxy-D-ribulos-1-ylimino)methylamino]-1-(5-phospho-beta-D-ribosyl)imidazole-4-carboxamide + L-glutamine = D-erythro-1-(imidazol-4-yl)glycerol 3-phosphate + 5-amino-1-(5-phospho-beta-D-ribosyl)imidazole-4-carboxamide + L-glutamate + H(+). It functions in the pathway amino-acid biosynthesis; L-histidine biosynthesis; L-histidine from 5-phospho-alpha-D-ribose 1-diphosphate: step 5/9. Its function is as follows. IGPS catalyzes the conversion of PRFAR and glutamine to IGP, AICAR and glutamate. The HisF subunit catalyzes the cyclization activity that produces IGP and AICAR from PRFAR using the ammonia provided by the HisH subunit. In Oleidesulfovibrio alaskensis (strain ATCC BAA-1058 / DSM 17464 / G20) (Desulfovibrio alaskensis), this protein is Imidazole glycerol phosphate synthase subunit HisF.